A 496-amino-acid chain; its full sequence is Protein TOO MANY MOUTHS (496 aa).

A signal peptide spans 1 to 23 (MARYEFFRQIFIVLSIVSPLVRS). Topologically, residues 24–473 (FTVITSDSTA…ATDVSSTSKS (450 aa)) are extracellular. LRR repeat units lie at residues 158-182 (GSSLQTLVLRENGFLGPIPDELGNL), 183-208 (TNLKVLDLHKNHLNGSIPLSFNRFSG), 210-228 (RSLDLSGNRLTGSIPGFVL), 229-252 (PALSVLDLNQNLLTGPVPPTLTSC), 254-276 (SLIKIDLSRNRVTGPIPESINRL), 277-300 (NQLVLLDLSYNRLSGPFPSSLQGL), 302-325 (SLQALMLKGNTKFSTTIPENAFKG), 326-350 (LKNLMILVLSNTNIQGSIPKSLTRL), 351-373 (NSLRVLHLEGNNLTGEIPLEFRD), and 375-401 (KHLSELRLNDNSLTGPVPFERDTVWRM). 2 N-linked (GlcNAc...) asparagine glycosylation sites follow: asparagine 181 and asparagine 196. An N-linked (GlcNAc...) asparagine glycan is attached at asparagine 362. The disordered stretch occupies residues 438–464 (AETSRPAPSGTVQHLSREEDGALPDGA). A helical membrane pass occupies residues 474–494 (LGFSYLSAFFLVFPNFIFMLI). At 495-496 (SS) the chain is on the cytoplasmic side.

It belongs to the RLP family. As to quaternary structure, forms heterodimer with ERECTA or ERL1 through their extracellular domains. Not able to form homodimer. Interacts with EPF2 but not with EPF1. Interacts with SERK1, SERK2, SERK3/BAK1 and SERK4. Interacts with EPFL9/STOMAGEN. In epidermal cells of developing shoots and leaves, but not in roots. Expressed in the stomatal cell lineage in the developing epidermis. Accumulates strongly in meristemoid mother cells (MMC) and meristemoids, somewhat less in meristemoid sister cells (stomatal-lineage ground cells, SLGC), and is barely detected in pavement cells.

The protein localises to the cell membrane. Promotes cell fate progression in stomatal development. In leaves, needed to correctly orient spacing divisions, to limit the number of asymmetric divisions in neighbor cells, and to promote the asymmetric (amplifying) divisions of meristemoids. In stems, promotes the conversion of meristemoids into guard mother cells (GMC). Positively regulates CAPRICE (CPC) expression in differentiating stomaless-forming cell files. Forms constitutive complexes with ERECTA and ERL1 involved in the recognition of the stomatal regulatory peptides EPF1, EPF2 and EPFL9/STOMAGEN. Modulates the activity of the ligand-receptor pairs EPF2-ERECTA and EPF1-ERL1 in stomatal development. Functions in a combinatorial specific manner with the ERECTA-family (ERf) receptor kinases in the regulation of the immune response. This is Protein TOO MANY MOUTHS from Arabidopsis thaliana (Mouse-ear cress).